A 372-amino-acid chain; its full sequence is MATLCRPAIAVPEHVITMQQTLDLARETHAGHPQRDLVLRLIQNTGVQTRHLVQPIEKTLAHPGFEVRNQVYEAEAKTRVPEVVRRALANAETEPSEIDLIVYVSCTGFMMPSLTAWIINSMGFRPETRQLPIAQLGCAAGGAAINRAHDFCVAYPDSNVLIVSCEFCSLCYQPTDIGVGSLLSNGLFGDALSAAVVRGQGGTGMRLERNGSHLVPDTEDWISYAVRDTGFHFQLDKRVPGTMEMLAPVLLDLVDLHGWSVPNMDFFIVHAGGPRILDDLCHFLDLPPEMFRYSRATLTERGNIASSVVFDALARLFDDGGAAESAQGLIAGFGPGITAEVAVGSWAKEGLGADVGRDLDELELTAGVALSG.

The active site involves cysteine 138.

It belongs to the thiolase-like superfamily. Chalcone/stilbene synthases family. As to quaternary structure, homodimer.

It carries out the reaction 5 malonyl-CoA + 5 H(+) = naphthalene-1,3,6,8-tetrol + 5 CO2 + 5 CoA + H2O. It participates in pigment biosynthesis; melanin biosynthesis. Functionally, involved in the biosynthesis of melanin but also various secondary metabolites containing a naphthoquinone ring. Catalyzes the iterative condensation of five CoA-linked malonyl units to form a pentaketide intermediate. THNS subsequently catalyzes the dual intramolecular Claisen and aldol condensations of this linear intermediate to produce the fused ring of 1,3,6,8-tetrahydroxynaphthalene (THN). The chain is 1,3,6,8-tetrahydroxynaphthalene synthase from Streptomyces griseus.